Reading from the N-terminus, the 134-residue chain is ATP synthase epsilon chain (134 aa).

Belongs to the ATPase epsilon chain family. As to quaternary structure, F-type ATPases have 2 components, CF(1) - the catalytic core - and CF(0) - the membrane proton channel. CF(1) has five subunits: alpha(3), beta(3), gamma(1), delta(1), epsilon(1). CF(0) has three main subunits: a, b and c.

Its subcellular location is the cell inner membrane. In terms of biological role, produces ATP from ADP in the presence of a proton gradient across the membrane. This chain is ATP synthase epsilon chain, found in Sinorhizobium fredii (strain NBRC 101917 / NGR234).